Consider the following 706-residue polypeptide: MNSLFASTARGLEELLKSELEALGAHDCKIVQGGVHFQGDDRLMYQSLLWSRLASRILLPLNEFKVYSDLDLYLGVQAIDWPSIFGVDKTFAVHFSGVNDEIRNSQYGALKVKDAIVDSFTRKMDQRPTVAKQQPDIRVNVFLQRDMASVALDLSGEGLHQRGYRDLTGQAPLKENLAAAIIQRSGWQPGTPMVDPMCGSGTLLIEAAMMASDRAPGLHRGHWGFTAWNAFNEALWRELTTEAQVRARRGLLETSSRFFGSDIDRRVIEMARANARRAGVAELITFNANDISKLVNPLPEGPVGTVISNPPYGERLESEPALIALHNMFGRMMKTAFGGWRLSLFSASPELLSCLQLRADREFKAKNGPLDCVQKNYQLTANPQGAGGALVAEDYANRLRKNVKKLDKWAKQQGIECYRLYDADLPDYNVAVDRYGSKVVVQEYAPPKTIDPQKARQRLFDVINATLAVLELPSNQLVLKTRERQKGKNQYEKLAQKGEFLLVSEYNAKLWVNLTDYLDTGLFLDHRIARQMLGKMSQGKDFLNLFAYTGTASVHAGLGGARSTTTVDMSRTYLEWAEKNLRANGLTGQQHRLIQADCLSWLSNTDEQFDVIFIDPPTFSNSKRMETTFDVQRDHLVLMKELKRLLRRKGTIMFSNNKRGFQMDLAGIAALGLEAKEITALTQSEDFARNRQIHNCWLVTHSQEEK.

In terms of domain architecture, THUMP spans 43–154; sequence LMYQSLLWSR…RDMASVALDL (112 aa).

The protein belongs to the methyltransferase superfamily. RlmKL family.

Its subcellular location is the cytoplasm. It catalyses the reaction guanosine(2445) in 23S rRNA + S-adenosyl-L-methionine = N(2)-methylguanosine(2445) in 23S rRNA + S-adenosyl-L-homocysteine + H(+). The catalysed reaction is guanosine(2069) in 23S rRNA + S-adenosyl-L-methionine = N(2)-methylguanosine(2069) in 23S rRNA + S-adenosyl-L-homocysteine + H(+). Specifically methylates the guanine in position 2445 (m2G2445) and the guanine in position 2069 (m7G2069) of 23S rRNA. This chain is Ribosomal RNA large subunit methyltransferase K/L, found in Yersinia pseudotuberculosis serotype O:1b (strain IP 31758).